The primary structure comprises 112 residues: Histone H3-4 (112 aa).

The interval 1–31 is disordered; the sequence is QTGAKAPRKALANKAARKTAPADGGVKKPHR.

This sequence belongs to the histone H3 family. The nucleosome is a histone octamer containing two molecules each of H2A, H2B, H3 and H4 assembled in one H3-H4 heterotetramer and two H2A-H2B heterodimers. The octamer wraps approximately 147 bp of DNA.

The protein resides in the nucleus. Its subcellular location is the chromosome. Functionally, core component of nucleosome. Nucleosomes wrap and compact DNA into chromatin, limiting DNA accessibility to the cellular machineries which require DNA as a template. Histones thereby play a central role in transcription regulation, DNA repair, DNA replication and chromosomal stability. DNA accessibility is regulated via a complex set of post-translational modifications of histones, also called histone code, and nucleosome remodeling. The chain is Histone H3-4 (H3-4) from Stylonychia lemnae (Ciliate).